The following is a 186-amino-acid chain: MISAGDLRKGTTFELDGQVYNVVDFLHVKPGKGAAFVRTKLKNVITGAVTETTFNPTAKMQEAVIERKEMQYLYSDESFYYFMDQETYEQIPLSFDQVENAIKYLKENMFATIKFYKGEAFSVEAPNFVELKIVSCEPGVKGNTTSNVMKPATLETNAVVQVPLFVNEGETIRVDTRTGEYMERVQ.

It belongs to the elongation factor P family.

It is found in the cytoplasm. The protein operates within protein biosynthesis; polypeptide chain elongation. Functionally, involved in peptide bond synthesis. Stimulates efficient translation and peptide-bond synthesis on native or reconstituted 70S ribosomes in vitro. Probably functions indirectly by altering the affinity of the ribosome for aminoacyl-tRNA, thus increasing their reactivity as acceptors for peptidyl transferase. The sequence is that of Elongation factor P from Clostridium acetobutylicum (strain ATCC 824 / DSM 792 / JCM 1419 / IAM 19013 / LMG 5710 / NBRC 13948 / NRRL B-527 / VKM B-1787 / 2291 / W).